The primary structure comprises 366 residues: E3 ubiquitin-protein ligase SINA-like 1 (366 aa).

Residues 1–37 (MVKGTNAEQALAREEASSSRPKRQRVPSIVEEEGENG) form a disordered region. The segment at 56–92 (CPICCNALTIPIFQCDKGHIACSSCCTNVSNKCPYCS) adopts an RING-type; degenerate zinc-finger fold. An SBD region spans residues 106-354 (VVEAFIVRCP…KGTYICIRSL (249 aa)). An SIAH-type; degenerate zinc finger spans residues 109 to 232 (AFIVRCPIVA…LYSHYAANHK (124 aa)). Residues cysteine 114, cysteine 186, histidine 198, cysteine 202, cysteine 209, cysteine 214, histidine 226, and histidine 231 each coordinate Zn(2+).

The protein belongs to the SINA (Seven in absentia) family.

The catalysed reaction is S-ubiquitinyl-[E2 ubiquitin-conjugating enzyme]-L-cysteine + [acceptor protein]-L-lysine = [E2 ubiquitin-conjugating enzyme]-L-cysteine + N(6)-ubiquitinyl-[acceptor protein]-L-lysine.. It participates in protein modification; protein ubiquitination. Its function is as follows. E3 ubiquitin-protein ligase that mediates ubiquitination and subsequent proteasomal degradation of target proteins. E3 ubiquitin ligases accept ubiquitin from an E2 ubiquitin-conjugating enzyme in the form of a thioester and then directly transfers the ubiquitin to targeted substrates. It probably triggers the ubiquitin-mediated degradation of different substrates. In Arabidopsis thaliana (Mouse-ear cress), this protein is E3 ubiquitin-protein ligase SINA-like 1.